The chain runs to 94 residues: Host-modulation protein 11K (94 aa).

In terms of assembly, interacts with host GRB2; this interaction alters host cell environment by modulating host signaling pathways.

Its subcellular location is the host cytoplasm. Enhances viral DNA replication and virion release. Mechansitically, optimizes viral DNA replication by interacting with host GRB2 to inhibit the negative effect of ERK signaling on B19 viral replication. Plays a role in viral infectivity. Induces apoptosis of primary erythroid progenitor cells. The protein is Host-modulation protein 11K (11K) of Human parvovirus B19 (strain HV) (HPV B19).